The primary structure comprises 255 residues: 5'-nucleotidase SurE (255 aa).

4 residues coordinate a divalent metal cation: Asp-11, Asp-12, Ser-43, and Asn-99.

Belongs to the SurE nucleotidase family. The cofactor is a divalent metal cation.

The protein resides in the cytoplasm. It carries out the reaction a ribonucleoside 5'-phosphate + H2O = a ribonucleoside + phosphate. Its function is as follows. Nucleotidase that shows phosphatase activity on nucleoside 5'-monophosphates. In Caldanaerobacter subterraneus subsp. tengcongensis (strain DSM 15242 / JCM 11007 / NBRC 100824 / MB4) (Thermoanaerobacter tengcongensis), this protein is 5'-nucleotidase SurE.